A 429-amino-acid polypeptide reads, in one-letter code: 4-hydroxy-3-methylbut-2-en-1-yl diphosphate synthase (flavodoxin) (429 aa).

[4Fe-4S] cluster-binding residues include cysteine 323, cysteine 326, cysteine 369, and glutamate 376.

This sequence belongs to the IspG family. [4Fe-4S] cluster serves as cofactor.

It catalyses the reaction (2E)-4-hydroxy-3-methylbut-2-enyl diphosphate + oxidized [flavodoxin] + H2O + 2 H(+) = 2-C-methyl-D-erythritol 2,4-cyclic diphosphate + reduced [flavodoxin]. It functions in the pathway isoprenoid biosynthesis; isopentenyl diphosphate biosynthesis via DXP pathway; isopentenyl diphosphate from 1-deoxy-D-xylulose 5-phosphate: step 5/6. In terms of biological role, converts 2C-methyl-D-erythritol 2,4-cyclodiphosphate (ME-2,4cPP) into 1-hydroxy-2-methyl-2-(E)-butenyl 4-diphosphate. This Wolbachia sp. subsp. Brugia malayi (strain TRS) protein is 4-hydroxy-3-methylbut-2-en-1-yl diphosphate synthase (flavodoxin).